Reading from the N-terminus, the 114-residue chain is Adapter SH3BGRL (114 aa).

The segment at 13–50 is required for interaction with HER2; that stretch reads SMAIKKKQQDVLGFLEANKIGFEEKDIAANEENRKWMR. A required for interaction with PFN1, HER2, and ATG12 region spans residues 54–71; it reads PENSRPATGYPLPPQIFN. The SH3-binding motif lies at 61 to 67; it reads TGYPLPP.

It belongs to the SH3BGR family. In terms of assembly, monomer. Interacts with PFN1/Profilin-1. Interacts with ERBB2. Interacts with ATG12. Interacts with BECN1. Interacts with translating ribosomes.

The protein localises to the cytoplasm. It localises to the cytosol. It is found in the cell membrane. Functionally, appears to function as an adapter protein that bridges proteins together or proteins with mRNAs. May function as a ubiquitin ligase-substrate adapter. Additionally, associates with translating cytoplasmic ribosomes and may promote the expression of specific mRNAs. The polypeptide is Adapter SH3BGRL (SH3BGRL) (Bos taurus (Bovine)).